The sequence spans 242 residues: 7-cyano-7-deazaguanine synthase (242 aa).

Residues 1–25 (MNSRKDKNSKGKNSDTKRKKSSQEN) form a disordered region. 32 to 42 (LSGGLDSTTCL) contacts ATP. C212, C221, C224, and C227 together coordinate Zn(2+).

Belongs to the QueC family. Zn(2+) is required as a cofactor.

It carries out the reaction 7-carboxy-7-deazaguanine + NH4(+) + ATP = 7-cyano-7-deazaguanine + ADP + phosphate + H2O + H(+). Its pathway is purine metabolism; 7-cyano-7-deazaguanine biosynthesis. Its function is as follows. Catalyzes the ATP-dependent conversion of 7-carboxy-7-deazaguanine (CDG) to 7-cyano-7-deazaguanine (preQ(0)). This chain is 7-cyano-7-deazaguanine synthase, found in Leptospira borgpetersenii serovar Hardjo-bovis (strain JB197).